The following is a 197-amino-acid chain: ATP-dependent Clp protease proteolytic subunit (197 aa).

Catalysis depends on S98, which acts as the Nucleophile. The active site involves H123.

It belongs to the peptidase S14 family. In terms of assembly, fourteen ClpP subunits assemble into 2 heptameric rings which stack back to back to give a disk-like structure with a central cavity, resembling the structure of eukaryotic proteasomes.

It is found in the cytoplasm. The enzyme catalyses Hydrolysis of proteins to small peptides in the presence of ATP and magnesium. alpha-casein is the usual test substrate. In the absence of ATP, only oligopeptides shorter than five residues are hydrolyzed (such as succinyl-Leu-Tyr-|-NHMec, and Leu-Tyr-Leu-|-Tyr-Trp, in which cleavage of the -Tyr-|-Leu- and -Tyr-|-Trp bonds also occurs).. Cleaves peptides in various proteins in a process that requires ATP hydrolysis. Has a chymotrypsin-like activity. Plays a major role in the degradation of misfolded proteins. The polypeptide is ATP-dependent Clp protease proteolytic subunit (Ligilactobacillus salivarius (strain UCC118) (Lactobacillus salivarius)).